A 553-amino-acid polypeptide reads, in one-letter code: Putative transport protein Ent638_0015 (553 aa).

5 helical membrane passes run 4 to 24 (IALT…IGNI), 28 to 48 (GVGL…HFAE), 65 to 85 (FGLI…FFAS), 95 to 115 (LFAL…HKLF), and 158 to 178 (MSYA…MWLV). 2 consecutive RCK C-terminal domains span residues 191–276 (KKHE…VIGQ) and 279–361 (ETSL…MVGN). The next 6 helical transmembrane spans lie at 371–391 (MLPV…PLYV), 403–425 (AGGP…LYWF), 439–459 (IVLF…DTLA), 464–484 (ISWI…IGIL), 493–513 (YLTL…LAFA), and 533–553 (LVMF…WGMG).

Belongs to the AAE transporter (TC 2.A.81) family. YidE subfamily.

It is found in the cell membrane. This is Putative transport protein Ent638_0015 from Enterobacter sp. (strain 638).